The chain runs to 66 residues: Large ribosomal subunit protein uL29 (66 aa).

This sequence belongs to the universal ribosomal protein uL29 family.

The protein is Large ribosomal subunit protein uL29 of Deinococcus deserti (strain DSM 17065 / CIP 109153 / LMG 22923 / VCD115).